Reading from the N-terminus, the 387-residue chain is Delta(12)-acyl-lipid-desaturase (387 aa).

Residues 1-31 (MGAGGRMTVPNKWEGEGDEKSQKPVQRVPSA) are disordered. A compositionally biased stretch (basic and acidic residues) spans 13–22 (WEGEGDEKSQ). Transmembrane regions (helical) follow at residues 58–78 (SYVL…TTYI) and 88–108 (AAWP…WVIA). The Histidine box-1 signature appears at 109–113 (HECGH). The helical transmembrane segment at 121–141 (WVDDCVGLVLHSALLVPYFSW) threads the bilayer. A Histidine box-2 motif is present at residues 145–149 (HRRHH). The next 3 membrane-spanning stretches (helical) occupy residues 183–203 (VMTL…LNVS), 229–249 (IYIS…IAAA), and 251–271 (GLAW…AFLV). Residues 319 to 323 (HVAHH) carry the Histidine box-3 motif.

This sequence belongs to the fatty acid desaturase type 1 family.

Its subcellular location is the membrane. It participates in lipid metabolism; polyunsaturated fatty acid biosynthesis. Functionally, delta(12)-fatty acid desaturase producing in a heterologous system linoleic acid (18:2(9Z,12Z)) and to a lower extent hexadecadienoic acid (16:2(9Z,12Z)). This is Delta(12)-acyl-lipid-desaturase from Punica granatum (Pomegranate).